A 475-amino-acid polypeptide reads, in one-letter code: Tryptophan--tRNA ligase, cytoplasmic (475 aa).

The 57-residue stretch at 12–68 (SPQELFSSIAAQGELVKSLKARKAPKEEIDSAVKMLLSLKTSYKEAMGEDYKADCPP) folds into the WHEP-TRS domain. The disordered stretch occupies residues 61-87 (DYKADCPPGNSTPDSHGDPEAVDDKED). N6-succinyllysine is present on K158. The short motif at 168-177 (PSSEAMHVGH) is the 'HIGH' region element. Positions 353–357 (KMSAS) match the 'KMSKS' region motif. S355 bears the Phosphoserine mark.

It belongs to the class-I aminoacyl-tRNA synthetase family. Homodimer. Interacts with oxidized form of GAPDH. Post-translationally, proteolytic cleavage generates 2 forms; T1-TrpRS and T2-TrpRS.

Its subcellular location is the cytoplasm. It catalyses the reaction tRNA(Trp) + L-tryptophan + ATP = L-tryptophyl-tRNA(Trp) + AMP + diphosphate + H(+). In terms of biological role, catalyzes the attachment of tryptophan to tRNA(Trp) in a two-step reaction: tryptophan is first activated by ATP to form Trp-AMP and then transferred to the acceptor end of the tRNA(Trp). Could also possess an angiostatic activity. This is Tryptophan--tRNA ligase, cytoplasmic (WARS1) from Oryctolagus cuniculus (Rabbit).